Consider the following 206-residue polypeptide: Outer-membrane lipoprotein carrier protein (206 aa).

The N-terminal stretch at 1–20 (MFYLIKKLPKFILFSLYLYA) is a signal peptide.

Belongs to the LolA family. As to quaternary structure, monomer.

It localises to the periplasm. Its function is as follows. Participates in the translocation of lipoproteins from the inner membrane to the outer membrane. Only forms a complex with a lipoprotein if the residue after the N-terminal Cys is not an aspartate (The Asp acts as a targeting signal to indicate that the lipoprotein should stay in the inner membrane). The protein is Outer-membrane lipoprotein carrier protein of Wigglesworthia glossinidia brevipalpis.